A 1755-amino-acid chain; its full sequence is Transposon Ty1-ML2 Gag-Pol polyprotein (1755 aa).

Positions 1–16 are enriched in low complexity; the sequence is MESQQLSQHSHISHGS. Disordered stretches follow at residues 1–93, 126–173, and 352–421; these read MESQ…MMTQ, PQSQ…RPPP, and GSRN…SKST. Composition is skewed to polar residues over residues 48–60 and 127–152; these read TKAN…TPAS and QSQF…GNTF. Over residues 153–165 the composition is skewed to low complexity; the sequence is TDSSSADSDMTST. Residues 299-401 form an RNA-binding region; it reads NNGIHINNKV…NSKSKTARAH (103 aa). Residues 402-418 are compositionally biased toward low complexity; the sequence is NVSTSNNSPSTDNDSIS. Ser-416 is subject to Phosphoserine. Catalysis depends on Asp-461, which acts as the For protease activity; shared with dimeric partner. Residues 583–640 are integrase-type zinc finger-like; sequence NVHTSESTRKYPYPFIHRMLAHANAQTIRYSLKNNTITYFNESDVDRSSAIDYQCPDC. One can recognise an Integrase catalytic domain in the interval 660–835; it reads NSYEPFQYLH…AGLDISTLLP (176 aa). Residues Asp-671 and Asp-736 each contribute to the Mg(2+) site. Disordered regions lie at residues 956–1087, 1092–1111, and 1130–1171; these read SKAV…ETEK, RSPS…NIVP, and DLPL…DSNA. Positions 960–969 are enriched in low complexity; the sequence is SPTDSTPPST. Residues 1005-1015 show a composition bias toward polar residues; sequence STPQISNIEST. A compositionally biased stretch (basic and acidic residues) spans 1038-1053; the sequence is ESSHASKSKDFRHSDS. Composition is skewed to polar residues over residues 1054–1082 and 1101–1111; these read YSEN…QISD and PENNSSHNIVP. The short motif at 1178–1212 is the Bipartite nuclear localization signal element; that stretch reads KKRSLEDNETEIKVSRDTWNTKNMRSLEPPRSKKR. Positions 1338–1476 constitute a Reverse transcriptase Ty1/copia-type domain; it reads NNYYITQLDI…DILGLEIKYQ (139 aa). Residues Asp-1346, Asp-1427, Asp-1428, Asp-1610, Glu-1652, and Asp-1685 each coordinate Mg(2+). Positions 1610–1752 constitute an RNase H Ty1/copia-type domain; that stretch reads DASYGNQPYY…IKTFKLLTNK (143 aa).

The capsid protein forms a homotrimer, from which the VLPs are assembled. The protease is a homodimer, whose active site consists of two apposed aspartic acid residues. Initially, virus-like particles (VLPs) are composed of the structural unprocessed proteins Gag and Gag-Pol, and also contain the host initiator methionine tRNA (tRNA(i)-Met) which serves as a primer for minus-strand DNA synthesis, and a dimer of genomic Ty RNA. Processing of the polyproteins occurs within the particle and proceeds by an ordered pathway, called maturation. First, the protease (PR) is released by autocatalytic cleavage of the Gag-Pol polyprotein yielding capsid protein p45 and a Pol-p154 precursor protein. This cleavage is a prerequisite for subsequent processing of Pol-p154 at the remaining sites to release the mature structural and catalytic proteins. Maturation takes place prior to the RT reaction and is required to produce transposition-competent VLPs.

Its subcellular location is the cytoplasm. The protein resides in the nucleus. It catalyses the reaction DNA(n) + a 2'-deoxyribonucleoside 5'-triphosphate = DNA(n+1) + diphosphate. It carries out the reaction Endonucleolytic cleavage to 5'-phosphomonoester.. Capsid protein (CA) is the structural component of the virus-like particle (VLP), forming the shell that encapsulates the retrotransposons dimeric RNA genome. The particles are assembled from trimer-clustered units and there are holes in the capsid shells that allow for the diffusion of macromolecules. CA also has nucleocapsid-like chaperone activity, promoting primer tRNA(i)-Met annealing to the multipartite primer-binding site (PBS), dimerization of Ty1 RNA and initiation of reverse transcription. In terms of biological role, the aspartyl protease (PR) mediates the proteolytic cleavages of the Gag and Gag-Pol polyproteins after assembly of the VLP. Functionally, reverse transcriptase/ribonuclease H (RT) is a multifunctional enzyme that catalyzes the conversion of the retro-elements RNA genome into dsDNA within the VLP. The enzyme displays a DNA polymerase activity that can copy either DNA or RNA templates, and a ribonuclease H (RNase H) activity that cleaves the RNA strand of RNA-DNA heteroduplexes during plus-strand synthesis and hydrolyzes RNA primers. The conversion leads to a linear dsDNA copy of the retrotransposon that includes long terminal repeats (LTRs) at both ends. Its function is as follows. Integrase (IN) targets the VLP to the nucleus, where a subparticle preintegration complex (PIC) containing at least integrase and the newly synthesized dsDNA copy of the retrotransposon must transit the nuclear membrane. Once in the nucleus, integrase performs the integration of the dsDNA into the host genome. The sequence is that of Transposon Ty1-ML2 Gag-Pol polyprotein (TY1B-ML2) from Saccharomyces cerevisiae (strain ATCC 204508 / S288c) (Baker's yeast).